Here is a 142-residue protein sequence, read N- to C-terminus: Large ribosomal subunit protein uL13 (142 aa).

The protein belongs to the universal ribosomal protein uL13 family. Part of the 50S ribosomal subunit.

Its function is as follows. This protein is one of the early assembly proteins of the 50S ribosomal subunit, although it is not seen to bind rRNA by itself. It is important during the early stages of 50S assembly. The polypeptide is Large ribosomal subunit protein uL13 (Pseudomonas putida (strain W619)).